We begin with the raw amino-acid sequence, 651 residues long: Acetyl-coenzyme A synthetase (651 aa).

CoA is bound by residues 189-192 (RGGK), T311, and N335. ATP-binding positions include 387–389 (GEP), 411–416 (DTWWQT), D500, and R515. S523 contributes to the CoA binding site. An ATP-binding site is contributed by R526. V537, H539, and V542 together coordinate Mg(2+). A CoA-binding site is contributed by R584. An N6-acetyllysine modification is found at K609.

This sequence belongs to the ATP-dependent AMP-binding enzyme family. Mg(2+) serves as cofactor. In terms of processing, acetylated. Deacetylation by the SIR2-homolog deacetylase activates the enzyme.

The catalysed reaction is acetate + ATP + CoA = acetyl-CoA + AMP + diphosphate. Catalyzes the conversion of acetate into acetyl-CoA (AcCoA), an essential intermediate at the junction of anabolic and catabolic pathways. AcsA undergoes a two-step reaction. In the first half reaction, AcsA combines acetate with ATP to form acetyl-adenylate (AcAMP) intermediate. In the second half reaction, it can then transfer the acetyl group from AcAMP to the sulfhydryl group of CoA, forming the product AcCoA. The sequence is that of Acetyl-coenzyme A synthetase from Rhizobium etli (strain CIAT 652).